Here is a 340-residue protein sequence, read N- to C-terminus: Phospho-N-acetylmuramoyl-pentapeptide-transferase (340 aa).

9 helical membrane passes run 22-42, 69-89, 95-115, 129-149, 156-176, 186-206, 209-229, 235-257, and 316-336; these read VVVP…LLIP, TMGG…WSGW, AVAL…WLVI, LLLQ…QGIP, GIGT…VLVG, GMDG…GLLH, PELS…LVHN, LFMG…LLGD, and VVGS…AWWH.

This sequence belongs to the glycosyltransferase 4 family. MraY subfamily. Mg(2+) serves as cofactor.

The protein localises to the cell inner membrane. The enzyme catalyses UDP-N-acetyl-alpha-D-muramoyl-L-alanyl-gamma-D-glutamyl-meso-2,6-diaminopimeloyl-D-alanyl-D-alanine + di-trans,octa-cis-undecaprenyl phosphate = di-trans,octa-cis-undecaprenyl diphospho-N-acetyl-alpha-D-muramoyl-L-alanyl-D-glutamyl-meso-2,6-diaminopimeloyl-D-alanyl-D-alanine + UMP. It functions in the pathway cell wall biogenesis; peptidoglycan biosynthesis. Functionally, catalyzes the initial step of the lipid cycle reactions in the biosynthesis of the cell wall peptidoglycan: transfers peptidoglycan precursor phospho-MurNAc-pentapeptide from UDP-MurNAc-pentapeptide onto the lipid carrier undecaprenyl phosphate, yielding undecaprenyl-pyrophosphoryl-MurNAc-pentapeptide, known as lipid I. This chain is Phospho-N-acetylmuramoyl-pentapeptide-transferase, found in Synechococcus sp. (strain JA-2-3B'a(2-13)) (Cyanobacteria bacterium Yellowstone B-Prime).